Here is a 279-residue protein sequence, read N- to C-terminus: Large ribosomal subunit protein uL2 (279 aa).

The interval 222–279 (GVAMNPVDHPHGGGEGRTSGGRHPVTPAGKPTKGAKTRVNKATDKFIIRSRHKAKKGR) is disordered. The span at 269 to 279 (IRSRHKAKKGR) shows a compositional bias: basic residues.

The protein belongs to the universal ribosomal protein uL2 family. As to quaternary structure, part of the 50S ribosomal subunit. Forms a bridge to the 30S subunit in the 70S ribosome.

Functionally, one of the primary rRNA binding proteins. Required for association of the 30S and 50S subunits to form the 70S ribosome, for tRNA binding and peptide bond formation. It has been suggested to have peptidyltransferase activity; this is somewhat controversial. Makes several contacts with the 16S rRNA in the 70S ribosome. The protein is Large ribosomal subunit protein uL2 of Caulobacter vibrioides (strain ATCC 19089 / CIP 103742 / CB 15) (Caulobacter crescentus).